Consider the following 558-residue polypeptide: Acylase ACY 1 proenzyme (558 aa).

The active-site Nucleophile is the T368.

This sequence belongs to the gamma-glutamyltransferase family. In terms of assembly, dimer of two non-identical chains processed from the same precursor.

It catalyses the reaction (7R)-7-(4-carboxybutanamido)cephalosporanate + H2O = (7R)-7-aminocephalosporanate + glutarate. The catalysed reaction is an N-terminal (5-L-glutamyl)-[peptide] + an alpha-amino acid = 5-L-glutamyl amino acid + an N-terminal L-alpha-aminoacyl-[peptide]. The enzyme catalyses glutathione + H2O = L-cysteinylglycine + L-glutamate. It carries out the reaction an S-substituted glutathione + H2O = an S-substituted L-cysteinylglycine + L-glutamate. Functionally, besides the cephalosporin acylase I activity which converts GL-7ACA into 7-ACA; this enzyme displays some gamma glutamyltranspeptidase activity. The polypeptide is Acylase ACY 1 proenzyme (acyI) (Pseudomonas sp. (strain V22)).